We begin with the raw amino-acid sequence, 185 residues long: Ribosome-recycling factor (185 aa).

It belongs to the RRF family.

It is found in the cytoplasm. In terms of biological role, responsible for the release of ribosomes from messenger RNA at the termination of protein biosynthesis. May increase the efficiency of translation by recycling ribosomes from one round of translation to another. This is Ribosome-recycling factor from Bacillus mycoides (strain KBAB4) (Bacillus weihenstephanensis).